The primary structure comprises 267 residues: tRNA pseudouridine synthase A (267 aa).

Residue D51 is the Nucleophile of the active site. A substrate-binding site is contributed by Y109.

This sequence belongs to the tRNA pseudouridine synthase TruA family. As to quaternary structure, homodimer.

The enzyme catalyses uridine(38/39/40) in tRNA = pseudouridine(38/39/40) in tRNA. Formation of pseudouridine at positions 38, 39 and 40 in the anticodon stem and loop of transfer RNAs. The protein is tRNA pseudouridine synthase A of Staphylococcus saprophyticus subsp. saprophyticus (strain ATCC 15305 / DSM 20229 / NCIMB 8711 / NCTC 7292 / S-41).